A 415-amino-acid chain; its full sequence is Serine hydroxymethyltransferase (415 aa).

Residues Leu118 and 122 to 124 (GHL) each bind (6S)-5,6,7,8-tetrahydrofolate. The residue at position 227 (Lys227) is an N6-(pyridoxal phosphate)lysine.

Belongs to the SHMT family. As to quaternary structure, homodimer. Pyridoxal 5'-phosphate is required as a cofactor.

It is found in the cytoplasm. The catalysed reaction is (6R)-5,10-methylene-5,6,7,8-tetrahydrofolate + glycine + H2O = (6S)-5,6,7,8-tetrahydrofolate + L-serine. It participates in one-carbon metabolism; tetrahydrofolate interconversion. It functions in the pathway amino-acid biosynthesis; glycine biosynthesis; glycine from L-serine: step 1/1. Its function is as follows. Catalyzes the reversible interconversion of serine and glycine with tetrahydrofolate (THF) serving as the one-carbon carrier. This reaction serves as the major source of one-carbon groups required for the biosynthesis of purines, thymidylate, methionine, and other important biomolecules. Also exhibits THF-independent aldolase activity toward beta-hydroxyamino acids, producing glycine and aldehydes, via a retro-aldol mechanism. This Elusimicrobium minutum (strain Pei191) protein is Serine hydroxymethyltransferase.